A 165-amino-acid chain; its full sequence is Chorismate pyruvate-lyase (165 aa).

The substrate site is built by Met-35, Arg-77, Leu-115, and Glu-156.

Belongs to the UbiC family. As to quaternary structure, monomer.

It is found in the cytoplasm. The enzyme catalyses chorismate = 4-hydroxybenzoate + pyruvate. Its pathway is cofactor biosynthesis; ubiquinone biosynthesis. Its function is as follows. Removes the pyruvyl group from chorismate, with concomitant aromatization of the ring, to provide 4-hydroxybenzoate (4HB) for the ubiquinone pathway. This is Chorismate pyruvate-lyase from Shigella dysenteriae serotype 1 (strain Sd197).